Here is a 406-residue protein sequence, read N- to C-terminus: Vacuole membrane protein 1 (406 aa).

Positions 1–20 are enriched in basic and acidic residues; sequence MAENGKNCDQRRIAMSKDQH. Residues 1–37 form a disordered region; it reads MAENGKNCDQRRIAMSKDQHNGSLTDPSSVHEKKRRD. Position 2 is an N-acetylalanine (Ala2). At 2–77 the chain is on the cytoplasmic side; it reads AENGKNCDQR…WTSKLWHRQS (76 aa). The chain crosses the membrane as a helical span at residues 78–98; the sequence is IVVSFLLLLAALVATYYVEGA. At 99 to 109 the chain is on the extracellular side; that stretch reads HQQYVQRIEKQ. A helical transmembrane segment spans residues 110–130; sequence FLLYAYWIGLGILSSVGLGTG. The Cytoplasmic segment spans residues 131-250; that stretch reads LHTFLLYLGP…ASRAKLAVQK (120 aa). The segment at 173–316 is VTT domain; it reads GAEGAISLWS…FVIVTFSKHI (144 aa). The chain crosses the membrane as a helical span at residues 251–271; it reads LVQKVGFFGILACASIPNPLF. The Extracellular segment spans residues 272 to 273; that stretch reads DL. Residues 274–294 form a helical membrane-spanning segment; it reads AGITCGHFLVPFWTFFGATLI. Over 295-305 the chain is Cytoplasmic; sequence GKAIIKMHIQK. The helical transmembrane segment at 306-326 threads the bilayer; the sequence is IFVIVTFSKHIVEQMVTFIGA. At 327–363 the chain is on the extracellular side; that stretch reads VPGIGPSLQKPFQEYLEAQRQKLHHRSEAGTPQGENW. The helical transmembrane segment at 364-384 threads the bilayer; that stretch reads LSWMFEKLVVAMVCYFVLSII. The Cytoplasmic portion of the chain corresponds to 385–406; that stretch reads NSMAQNYAKRIQQRLNSEEKTK.

It belongs to the VMP1 family. Interacts with BECN1. Interacts with TJP1. Interacts with TP53INP2. Interacts with TMEM41B. Interacts with ATP2A2, PLN and SLN; competes with PLN and SLN to prevent them from forming an inhibitory complex with ATP2A2. Interacts with ATG2A.

It localises to the endoplasmic reticulum-Golgi intermediate compartment membrane. Its subcellular location is the cell membrane. It is found in the vacuole membrane. The protein resides in the endoplasmic reticulum membrane. The enzyme catalyses a 1,2-diacyl-sn-glycero-3-phospho-L-serine(in) = a 1,2-diacyl-sn-glycero-3-phospho-L-serine(out). The catalysed reaction is cholesterol(in) = cholesterol(out). It catalyses the reaction a 1,2-diacyl-sn-glycero-3-phosphocholine(in) = a 1,2-diacyl-sn-glycero-3-phosphocholine(out). It carries out the reaction a 1,2-diacyl-sn-glycero-3-phosphoethanolamine(in) = a 1,2-diacyl-sn-glycero-3-phosphoethanolamine(out). In terms of biological role, phospholipid scramblase involved in lipid homeostasis and membrane dynamics processes. Has phospholipid scramblase activity toward cholesterol and phosphatidylserine, as well as phosphatidylethanolamine and phosphatidylcholine. Required for autophagosome formation: participates in early stages of autophagosome biogenesis at the endoplasmic reticulum (ER) membrane by reequilibrating the leaflets of the ER as lipids are extracted by ATG2 (ATG2A or ATG2B) to mediate autophagosome assembly. Regulates ATP2A2 activity to control ER-isolation membrane contacts for autophagosome formation. In addition to autophagy, involved in other processes in which phospholipid scramblase activity is required. Modulates ER contacts with lipid droplets, mitochondria and endosomes. Plays an essential role in formation of cell junctions. Upon stress such as bacterial and viral infection, promotes formation of cytoplasmic vacuoles followed by cell death. Involved in the cytoplasmic vacuolization of acinar cells during the early stage of acute pancreatitis. The polypeptide is Vacuole membrane protein 1 (Mus musculus (Mouse)).